Here is a 351-residue protein sequence, read N- to C-terminus: Anthranilate phosphoribosyltransferase (351 aa).

Residues Gly80, 83-84 (GD), Thr88, 90-93 (NIST), 108-116 (KHGNRSVTS), and Ser120 each bind 5-phospho-alpha-D-ribose 1-diphosphate. Gly80 serves as a coordination point for anthranilate. Ser92 is a Mg(2+) binding site. Asn111 lines the anthranilate pocket. Position 166 (Arg166) interacts with anthranilate. Mg(2+)-binding residues include Asp229 and Glu230.

This sequence belongs to the anthranilate phosphoribosyltransferase family. Homodimer. Mg(2+) is required as a cofactor.

It catalyses the reaction N-(5-phospho-beta-D-ribosyl)anthranilate + diphosphate = 5-phospho-alpha-D-ribose 1-diphosphate + anthranilate. It functions in the pathway amino-acid biosynthesis; L-tryptophan biosynthesis; L-tryptophan from chorismate: step 2/5. Its function is as follows. Catalyzes the transfer of the phosphoribosyl group of 5-phosphorylribose-1-pyrophosphate (PRPP) to anthranilate to yield N-(5'-phosphoribosyl)-anthranilate (PRA). The protein is Anthranilate phosphoribosyltransferase of Pelodictyon phaeoclathratiforme (strain DSM 5477 / BU-1).